A 339-amino-acid chain; its full sequence is Holliday junction branch migration complex subunit RuvB (339 aa).

The interval 1–22 is disordered; the sequence is MIDADPTLRPEPLPEDNDRALR. Positions 1-182 are large ATPase domain (RuvB-L); it reads MIDADPTLRP…FGIPTRLQFY (182 aa). ATP is bound by residues Leu-21, Arg-22, Gly-63, Lys-66, Thr-67, Thr-68, 129-131, Arg-172, Tyr-182, and Arg-219; that span reads EDF. Thr-67 is a binding site for Mg(2+). The tract at residues 183–253 is small ATPAse domain (RuvB-S); sequence TIDELFEIVS…LADGALTRLG (71 aa). The tract at residues 256–339 is head domain (RuvB-H); it reads QLGLDGADRR…PPKSQSDLFG (84 aa). Positions 292, 311, and 316 each coordinate DNA.

The protein belongs to the RuvB family. Homohexamer. Forms an RuvA(8)-RuvB(12)-Holliday junction (HJ) complex. HJ DNA is sandwiched between 2 RuvA tetramers; dsDNA enters through RuvA and exits via RuvB. An RuvB hexamer assembles on each DNA strand where it exits the tetramer. Each RuvB hexamer is contacted by two RuvA subunits (via domain III) on 2 adjacent RuvB subunits; this complex drives branch migration. In the full resolvosome a probable DNA-RuvA(4)-RuvB(12)-RuvC(2) complex forms which resolves the HJ.

The protein localises to the cytoplasm. The catalysed reaction is ATP + H2O = ADP + phosphate + H(+). Functionally, the RuvA-RuvB-RuvC complex processes Holliday junction (HJ) DNA during genetic recombination and DNA repair, while the RuvA-RuvB complex plays an important role in the rescue of blocked DNA replication forks via replication fork reversal (RFR). RuvA specifically binds to HJ cruciform DNA, conferring on it an open structure. The RuvB hexamer acts as an ATP-dependent pump, pulling dsDNA into and through the RuvAB complex. RuvB forms 2 homohexamers on either side of HJ DNA bound by 1 or 2 RuvA tetramers; 4 subunits per hexamer contact DNA at a time. Coordinated motions by a converter formed by DNA-disengaged RuvB subunits stimulates ATP hydrolysis and nucleotide exchange. Immobilization of the converter enables RuvB to convert the ATP-contained energy into a lever motion, pulling 2 nucleotides of DNA out of the RuvA tetramer per ATP hydrolyzed, thus driving DNA branch migration. The RuvB motors rotate together with the DNA substrate, which together with the progressing nucleotide cycle form the mechanistic basis for DNA recombination by continuous HJ branch migration. Branch migration allows RuvC to scan DNA until it finds its consensus sequence, where it cleaves and resolves cruciform DNA. This is Holliday junction branch migration complex subunit RuvB from Ruegeria sp. (strain TM1040) (Silicibacter sp.).